Consider the following 221-residue polypeptide: Protein-L-isoaspartate O-methyltransferase (221 aa).

Serine 57 is a catalytic residue.

The protein belongs to the methyltransferase superfamily. L-isoaspartyl/D-aspartyl protein methyltransferase family.

The protein resides in the cytoplasm. The catalysed reaction is [protein]-L-isoaspartate + S-adenosyl-L-methionine = [protein]-L-isoaspartate alpha-methyl ester + S-adenosyl-L-homocysteine. In terms of biological role, catalyzes the methyl esterification of L-isoaspartyl residues in peptides and proteins that result from spontaneous decomposition of normal L-aspartyl and L-asparaginyl residues. It plays a role in the repair and/or degradation of damaged proteins. In Korarchaeum cryptofilum (strain OPF8), this protein is Protein-L-isoaspartate O-methyltransferase.